Here is a 270-residue protein sequence, read N- to C-terminus: Tetraspanin-14 (270 aa).

Residues 1-17 (MHYYRYSNAEVSCWYKY) lie on the Cytoplasmic side of the membrane. A helical transmembrane segment spans residues 18 to 38 (LLFSYNIVFWLAGVVFLGVGL). The Extracellular segment spans residues 39–61 (WAWSEKGVLSDLTKVTRLHGIDP). The helical transmembrane segment at 62–82 (VVLVLMVGVVMFTLGFAGCVG) threads the bilayer. The Cytoplasmic portion of the chain corresponds to 83–92 (ALRENICLLK). Residues 93–113 (FFCGAIVLIFFLELAVAVLAF) form a helical membrane-spanning segment. Over 114–232 (LFQDWVRDRF…QALEGWLPRN (119 aa)) the chain is Extracellular. Positions 114 to 232 (LFQDWVRDRF…QALEGWLPRN (119 aa)) are necessary and sufficient for interaction with ADAM10. Cystine bridges form between Cys-153–Cys-221, Cys-154–Cys-186, Cys-170–Cys-180, and Cys-187–Cys-200. Asn-169 is a glycosylation site (N-linked (GlcNAc...) asparagine). A helical transmembrane segment spans residues 233-253 (IYIVAGVFIAISLLQIFGIFL). Over 254–270 (ARTLISDIEAVKAGHHF) the chain is Cytoplasmic.

The protein belongs to the tetraspanin (TM4SF) family. Interacts with ADAM10; the interaction promotes ADAM10 maturation and cell surface expression.

The protein resides in the cell membrane. In terms of biological role, part of TspanC8 subgroup, composed of 6 members that interact with the transmembrane metalloprotease ADAM10. This interaction is required for ADAM10 exit from the endoplasmic reticulum and for enzymatic maturation and trafficking to the cell surface as well as substrate specificity. Different TspanC8/ADAM10 complexes have distinct substrates. Negatively regulates ADAM10-mediated cleavage of GP6. Promotes ADAM10-mediated cleavage of CDH5. This Mus musculus (Mouse) protein is Tetraspanin-14 (Tspan14).